An 87-amino-acid chain; its full sequence is uncharacterized protein (87 aa).

Positions 67-87 are disordered; sequence TGGDPREAVVRPADQVEGYTG.

This is an uncharacterized protein from Mycobacterium bovis (strain ATCC BAA-935 / AF2122/97).